Reading from the N-terminus, the 630-residue chain is Chaperone protein DnaK (630 aa).

Threonine 197 carries the phosphothreonine; by autocatalysis modification. Over residues 604-618 (KNNESVKNNESVKNN) the composition is skewed to polar residues. The disordered stretch occupies residues 604-630 (KNNESVKNNESVKNNESVKDVDFEEIK). A compositionally biased stretch (basic and acidic residues) spans 619–630 (ESVKDVDFEEIK).

It belongs to the heat shock protein 70 family.

Its function is as follows. Acts as a chaperone. The polypeptide is Chaperone protein DnaK (Karelsulcia muelleri (strain GWSS) (Sulcia muelleri)).